The primary structure comprises 260 residues: Indole-3-glycerol phosphate synthase (260 aa).

The protein belongs to the TrpC family.

The catalysed reaction is 1-(2-carboxyphenylamino)-1-deoxy-D-ribulose 5-phosphate + H(+) = (1S,2R)-1-C-(indol-3-yl)glycerol 3-phosphate + CO2 + H2O. Its pathway is amino-acid biosynthesis; L-tryptophan biosynthesis; L-tryptophan from chorismate: step 4/5. This Neisseria gonorrhoeae (strain ATCC 700825 / FA 1090) protein is Indole-3-glycerol phosphate synthase.